A 127-amino-acid chain; its full sequence is Small ribosomal subunit protein uS8m (127 aa).

Belongs to the universal ribosomal protein uS8 family.

The protein localises to the mitochondrion. The chain is Small ribosomal subunit protein uS8m (RPS8) from Acanthamoeba castellanii (Amoeba).